A 285-amino-acid polypeptide reads, in one-letter code: Geranyl diphosphate 2-C-methyltransferase (285 aa).

This sequence belongs to the geranyl diphosphate 2-C-methyltransferase family. Requires Mg(2+) as cofactor.

It catalyses the reaction (2E)-geranyl diphosphate + S-adenosyl-L-methionine = (E)-2-methylgeranyl diphosphate + S-adenosyl-L-homocysteine + H(+). Catalyzes the SAM-dependent methylation of geranyl diphosphate (GPP) to yield (E)-2-methylgeranyl diphosphate (2-MeGPP). The protein is Geranyl diphosphate 2-C-methyltransferase of Saccharopolyspora erythraea (strain ATCC 11635 / DSM 40517 / JCM 4748 / NBRC 13426 / NCIMB 8594 / NRRL 2338).